A 238-amino-acid chain; its full sequence is 2-C-methyl-D-erythritol 4-phosphate cytidylyltransferase (238 aa).

This sequence belongs to the IspD/TarI cytidylyltransferase family. IspD subfamily.

The enzyme catalyses 2-C-methyl-D-erythritol 4-phosphate + CTP + H(+) = 4-CDP-2-C-methyl-D-erythritol + diphosphate. Its pathway is isoprenoid biosynthesis; isopentenyl diphosphate biosynthesis via DXP pathway; isopentenyl diphosphate from 1-deoxy-D-xylulose 5-phosphate: step 2/6. Functionally, catalyzes the formation of 4-diphosphocytidyl-2-C-methyl-D-erythritol from CTP and 2-C-methyl-D-erythritol 4-phosphate (MEP). This Alteromonas mediterranea (strain DSM 17117 / CIP 110805 / LMG 28347 / Deep ecotype) protein is 2-C-methyl-D-erythritol 4-phosphate cytidylyltransferase.